We begin with the raw amino-acid sequence, 280 residues long: Cis-2,3-dihydrobiphenyl-2,3-diol dehydrogenase (280 aa).

Residue Leu-9–Ala-33 participates in NAD(+) binding. Substrate is bound at residue Ser-142. The Proton acceptor role is filled by Tyr-155.

Belongs to the short-chain dehydrogenases/reductases (SDR) family.

It catalyses the reaction (2R,3S)-3-phenylcyclohexa-3,5-diene-1,2-diol + NAD(+) = biphenyl-2,3-diol + NADH + H(+). It functions in the pathway xenobiotic degradation; biphenyl degradation; 2-hydroxy-2,4-pentadienoate and benzoate from biphenyl: step 2/4. This chain is Cis-2,3-dihydrobiphenyl-2,3-diol dehydrogenase (bphB), found in Rhodococcus globerulus.